The chain runs to 184 residues: MGLEEKLPSGFLLTTVEQAAGWVRKSSVFPATFGLACCAIEMMTTGAGRYDLARFGMEVFRGSPRQADLMIVAGRVSQKMAPVLRQVYDQMPNPKWVISMGVCASSGGMFNNYAIVQGVDHVVPVDIYLPGCPPRPEMLMDAILKLHQKIQSSKLGVNAEEAAREAEEAALKALPTIEMKGLLR.

Cys-37, Cys-38, Cys-103, and Cys-132 together coordinate [4Fe-4S] cluster.

This sequence belongs to the complex I 20 kDa subunit family. NDH-1 is composed of 14 different subunits. Subunits NuoB, C, D, E, F, and G constitute the peripheral sector of the complex. It depends on [4Fe-4S] cluster as a cofactor.

Its subcellular location is the cell membrane. It carries out the reaction a quinone + NADH + 5 H(+)(in) = a quinol + NAD(+) + 4 H(+)(out). NDH-1 shuttles electrons from NADH, via FMN and iron-sulfur (Fe-S) centers, to quinones in the respiratory chain. The immediate electron acceptor for the enzyme in this species is believed to be a menaquinone. Couples the redox reaction to proton translocation (for every two electrons transferred, four hydrogen ions are translocated across the cytoplasmic membrane), and thus conserves the redox energy in a proton gradient. In Streptomyces coelicolor (strain ATCC BAA-471 / A3(2) / M145), this protein is NADH-quinone oxidoreductase subunit B 1.